The following is a 471-amino-acid chain: Putative multidrug resistance protein MdtD (471 aa).

Residues 1 to 11 are Periplasmic-facing; that stretch reads MTDLPDSTRWQ. The helical transmembrane segment at 12–32 threads the bilayer; that stretch reads LWIVAFGFFMQSLDTTIVNTA. Topologically, residues 33–48 are cytoplasmic; the sequence is LPSMAQSLGESPLHMH. Residues 49–69 traverse the membrane as a helical segment; the sequence is MVIVSYVLTVAVMLPASGWLA. Residues 70 to 76 lie on the Periplasmic side of the membrane; that stretch reads DKVGVRN. The helical transmembrane segment at 77 to 97 threads the bilayer; that stretch reads IFFTAIVLFTLGSLFCALSAT. At 98–101 the chain is on the cytoplasmic side; that stretch reads LNEL. A helical transmembrane segment spans residues 102 to 124; sequence LLARALQGVGGAMMVPVGRLTVM. At 125 to 137 the chain is on the periplasmic side; the sequence is KIVPREQYMAAMT. Residues 138 to 158 traverse the membrane as a helical segment; that stretch reads FVTLPGQVGPLLGPALGGLLV. The Cytoplasmic portion of the chain corresponds to 159 to 164; it reads EYASWH. The chain crosses the membrane as a helical span at residues 165 to 185; sequence WIFLINIPVGIIGAIATLMLM. Residues 186-196 are Periplasmic-facing; the sequence is PNYTMQTRRFD. The helical transmembrane segment at 197–217 threads the bilayer; that stretch reads LSGFLLLAVGMAVLTLALDGS. At 218–224 the chain is on the cytoplasmic side; that stretch reads KGTGLSP. The helical transmembrane segment at 225 to 245 threads the bilayer; the sequence is LAIAGLAAIGVVALVLYLLHA. The Periplasmic portion of the chain corresponds to 246-262; it reads RNNNRALFSLKLFRTRT. A helical transmembrane segment spans residues 263 to 283; the sequence is FSLGLAGSFAGRIGSGMLPFM. Residues 284 to 285 lie on the Cytoplasmic side of the membrane; the sequence is TP. The helical transmembrane segment at 286 to 306 threads the bilayer; that stretch reads VFLQIGLGFSPFHAGLMMIPM. Residues 307 to 341 lie on the Periplasmic side of the membrane; the sequence is VLGSMGMKRIVVQVVNRFGYRRVLVATTLGLSLVT. A helical membrane pass occupies residues 342 to 362; that stretch reads LLFMTTALLGWYYVLPFVLFL. The Cytoplasmic portion of the chain corresponds to 363 to 395; it reads QGMVNSTRFSSMNTLTLKDLPDNLASSGNSLLS. Residues 396-416 traverse the membrane as a helical segment; that stretch reads MIMQLSMSIGVTIAGLLLGLF. Topologically, residues 417 to 430 are periplasmic; that stretch reads GSQHVSVDSSTTQT. The helical transmembrane segment at 431-451 threads the bilayer; sequence VFMYTWLSMALIIALPAFIFA. Over 452 to 471 the chain is Cytoplasmic; the sequence is RVPNDTHQNVAISRRKRSAQ.

This sequence belongs to the major facilitator superfamily. TCR/Tet family.

It localises to the cell inner membrane. The protein is Putative multidrug resistance protein MdtD of Escherichia fergusonii (strain ATCC 35469 / DSM 13698 / CCUG 18766 / IAM 14443 / JCM 21226 / LMG 7866 / NBRC 102419 / NCTC 12128 / CDC 0568-73).